Here is a 409-residue protein sequence, read N- to C-terminus: Elongation factor Tu (409 aa).

In terms of domain architecture, tr-type G spans 10 to 214 (KPHVNIGTIG…EVDAYIPEPE (205 aa)). The interval 19–26 (GHVDHGKT) is G1. 19–26 (GHVDHGKT) contributes to the GTP binding site. Residue Thr-26 coordinates Mg(2+). Residues 60 to 64 (GITIN) are G2. A G3 region spans residues 81–84 (DCPG). Residues 81–85 (DCPGH) and 136–139 (NKQD) contribute to the GTP site. The G4 stretch occupies residues 136 to 139 (NKQD). Positions 174–176 (SAL) are G5.

It belongs to the TRAFAC class translation factor GTPase superfamily. Classic translation factor GTPase family. EF-Tu/EF-1A subfamily. Monomer.

It localises to the cytoplasm. It carries out the reaction GTP + H2O = GDP + phosphate + H(+). GTP hydrolase that promotes the GTP-dependent binding of aminoacyl-tRNA to the A-site of ribosomes during protein biosynthesis. This Rippkaea orientalis (strain PCC 8801 / RF-1) (Cyanothece sp. (strain PCC 8801)) protein is Elongation factor Tu.